A 133-amino-acid chain; its full sequence is ATP synthase epsilon chain (133 aa).

The protein belongs to the ATPase epsilon chain family. As to quaternary structure, F-type ATPases have 2 components, CF(1) - the catalytic core - and CF(0) - the membrane proton channel. CF(1) has five subunits: alpha(3), beta(3), gamma(1), delta(1), epsilon(1). CF(0) has three main subunits: a, b and c.

The protein localises to the cell inner membrane. Functionally, produces ATP from ADP in the presence of a proton gradient across the membrane. The chain is ATP synthase epsilon chain from Desulfosudis oleivorans (strain DSM 6200 / JCM 39069 / Hxd3) (Desulfococcus oleovorans).